Reading from the N-terminus, the 191-residue chain is UPF0301 protein Bphy_2327 (191 aa).

Belongs to the UPF0301 (AlgH) family.

The protein is UPF0301 protein Bphy_2327 of Paraburkholderia phymatum (strain DSM 17167 / CIP 108236 / LMG 21445 / STM815) (Burkholderia phymatum).